The primary structure comprises 471 residues: Ribulose bisphosphate carboxylase large chain (471 aa).

Position 5 is an N6,N6,N6-trimethyllysine (Lys5). Substrate-binding residues include Asn114 and Thr164. The active-site Proton acceptor is Lys166. Position 168 (Lys168) interacts with substrate. 3 residues coordinate Mg(2+): Lys192, Asp194, and Glu195. Lys192 is subject to N6-carboxylysine. The active-site Proton acceptor is the His285. Residues Arg286, His318, and Ser370 each coordinate substrate.

Belongs to the RuBisCO large chain family. Type I subfamily. In terms of assembly, heterohexadecamer of 8 large chains and 8 small chains; disulfide-linked. The disulfide link is formed within the large subunit homodimers. The cofactor is Mg(2+). Post-translationally, the disulfide bond which can form in the large chain dimeric partners within the hexadecamer appears to be associated with oxidative stress and protein turnover.

Its subcellular location is the plastid. It localises to the chloroplast. It carries out the reaction 2 (2R)-3-phosphoglycerate + 2 H(+) = D-ribulose 1,5-bisphosphate + CO2 + H2O. The enzyme catalyses D-ribulose 1,5-bisphosphate + O2 = 2-phosphoglycolate + (2R)-3-phosphoglycerate + 2 H(+). RuBisCO catalyzes two reactions: the carboxylation of D-ribulose 1,5-bisphosphate, the primary event in carbon dioxide fixation, as well as the oxidative fragmentation of the pentose substrate in the photorespiration process. Both reactions occur simultaneously and in competition at the same active site. This Chiococca alba (West Indian milkberry) protein is Ribulose bisphosphate carboxylase large chain.